The sequence spans 448 residues: Portal protein (448 aa).

Residues 1–25 (MAKRGRKPKELVPGPGSIDPSDVPK) are disordered.

It belongs to the P23virus portal protein family. Homododecamer. Interacts with the capsid protein. Interacts with the terminase large subunit; this interaction allows the packaging of viral DNA.

The protein resides in the virion. In terms of biological role, forms the portal vertex of the capsid. This portal plays critical roles in head assembly, genome packaging, neck/tail attachment, and genome ejection. The portal protein multimerizes as a single ring-shaped homododecamer arranged around a central channel. Forms the portal vertex of the capsid. This portal plays critical roles in head assembly, genome packaging, neck/tail attachment, and genome ejection. In Thermus thermophilus (Thermus thermophilus phage G20c), this protein is Portal protein.